A 174-amino-acid polypeptide reads, in one-letter code: dCTP deaminase, dUMP-forming (174 aa).

DCTP is bound by residues 93–98, Asp-111, 119–121, Gln-138, and Tyr-151; these read RSSIGR and TLE. Glu-121 (proton donor/acceptor) is an active-site residue.

This sequence belongs to the dCTP deaminase family. Homotrimer.

It catalyses the reaction dCTP + 2 H2O = dUMP + NH4(+) + diphosphate. It participates in pyrimidine metabolism; dUMP biosynthesis; dUMP from dCTP: step 1/1. Functionally, bifunctional enzyme that catalyzes both the deamination of dCTP to dUTP and the hydrolysis of dUTP to dUMP without releasing the toxic dUTP intermediate. This Leptospira biflexa serovar Patoc (strain Patoc 1 / Ames) protein is dCTP deaminase, dUMP-forming.